The chain runs to 460 residues: MANTLFDKIWDAHVVQKVEEGPTQLYIDRLYCHEVTSPQAFAGLRARGVKVFRPDHVYCMPDHNTPTHDQDKPIEDPVSKTQVDTLAKNAKDFGLAHFGMMDKRNGIIHVVGPERGLTLPGMTIVCGDSHTSTHGAMGAVAFGIGTSEVEMVLASQCILQSRPKTMRITIDGELGKGVTAKDMALYMMSKMTTSGATGFFVEYAGSAVRNLSMEGRLTLCNLSIEMGARGGMVAPDEVTFEYIKGREHAPKGVDWDKAVSHWKTLKSDDDAVFDKEIRFDAADIQPMITYGTNPGMGMGITEHIPVDDKSASFKKSLDYMGFQPGESLLGKKIDYVFLGACTNGRIEDFRAFTSLVRGKKKADHVTAWLVPGSWMVDAQIREEGLDKILEEAGFAIRQPGCSACLAMNDDKIPAGKYSVSTSNRNFEGRQGPGARTLLASPLVAAAAAVTGVITDPRELI.

[4Fe-4S] cluster contacts are provided by C341, C401, and C404.

Belongs to the aconitase/IPM isomerase family. LeuC type 1 subfamily. Heterodimer of LeuC and LeuD. The cofactor is [4Fe-4S] cluster.

The catalysed reaction is (2R,3S)-3-isopropylmalate = (2S)-2-isopropylmalate. It functions in the pathway amino-acid biosynthesis; L-leucine biosynthesis; L-leucine from 3-methyl-2-oxobutanoate: step 2/4. Functionally, catalyzes the isomerization between 2-isopropylmalate and 3-isopropylmalate, via the formation of 2-isopropylmaleate. In Phocaeicola vulgatus (strain ATCC 8482 / DSM 1447 / JCM 5826 / CCUG 4940 / NBRC 14291 / NCTC 11154) (Bacteroides vulgatus), this protein is 3-isopropylmalate dehydratase large subunit.